The primary structure comprises 243 residues: UPF0173 metal-dependent hydrolase Xaut_3786 (243 aa).

Belongs to the UPF0173 family.

The sequence is that of UPF0173 metal-dependent hydrolase Xaut_3786 from Xanthobacter autotrophicus (strain ATCC BAA-1158 / Py2).